The following is a 75-amino-acid chain: Small ribosomal subunit protein bS18 (75 aa).

The residue at position 2 (Ala-2) is an N-acetylalanine.

This sequence belongs to the bacterial ribosomal protein bS18 family. Part of the 30S ribosomal subunit. Forms a tight heterodimer with protein bS6.

Functionally, binds as a heterodimer with protein bS6 to the central domain of the 16S rRNA, where it helps stabilize the platform of the 30S subunit. The sequence is that of Small ribosomal subunit protein bS18 (rpsR) from Salmonella typhimurium (strain LT2 / SGSC1412 / ATCC 700720).